A 261-amino-acid chain; its full sequence is uncharacterized protein (261 aa).

This is an uncharacterized protein from Saccharomyces cerevisiae (strain ATCC 204508 / S288c) (Baker's yeast).